The chain runs to 147 residues: MAAAALTSQLNALVNNMFAMGLLDDQFQQLQMLQDSTAPDFVSEVVTLFCDDGERIICELSRQLEKPNVDFDRVDSYVHQLKGSSASVGAQKVKNTCIQFREFCQQRSRDGCLKTLDLVRTEFYDLRNKFQAMLQLEQQIQACYPKH.

The HPt domain maps to 38-133 (APDFVSEVVT…YDLRNKFQAM (96 aa)). At His-79 the chain carries Phosphohistidine.

Post-translationally, two-component system major event consists of a His-to-Asp phosphorelay between a sensor histidine kinase (HK) and a response regulator (RR). In plants, the His-to-Asp phosphorelay involves an additional intermediate named Histidine-containing phosphotransfer protein (HPt). This multistep phosphorelay consists of a His-Asp-His-Asp sequential transfer of a phosphate group between first a His and an Asp of the HK protein, followed by the transfer to a conserved His of the HPt protein and finally the transfer to an Asp in the receiver domain of the RR protein. In terms of tissue distribution, widely expressed.

It is found in the cytoplasm. It localises to the cytosol. Its subcellular location is the nucleus. Functionally, functions as a two-component phosphorelay mediators between cytokinin sensor histidine kinases and response regulators (B-type ARRs). Plays an important role in propagating cytokinin signal transduction through the multistep His-to-Asp phosphorelay. Functions as a positive regulator of the cytokinin signaling pathway. May play a regulatory role in salt and drought tolerance during plant development. This Oryza sativa subsp. japonica (Rice) protein is Histidine-containing phosphotransfer protein 1.